The chain runs to 554 residues: CTP synthase (554 aa).

The segment at 1–265 (MTPLIFVTGG…DEIVVNQLKL (265 aa)) is amidoligase domain. S13 is a binding site for CTP. S13 serves as a coordination point for UTP. 14 to 19 (SLGKGI) serves as a coordination point for ATP. Residues D71 and E139 each contribute to the Mg(2+) site. Residues 146–148 (DIE), 186–191 (KTKPTQ), and K222 each bind CTP. UTP-binding positions include 186 to 191 (KTKPTQ) and K222. Positions 292–545 (TIAVVGKYVD…IRAARERKAG (254 aa)) constitute a Glutamine amidotransferase type-1 domain. G353 is a binding site for L-glutamine. C380 serves as the catalytic Nucleophile; for glutamine hydrolysis. Residues 381–384 (YGMQ), E404, and R471 contribute to the L-glutamine site. Catalysis depends on residues H518 and E520.

It belongs to the CTP synthase family. Homotetramer.

The catalysed reaction is UTP + L-glutamine + ATP + H2O = CTP + L-glutamate + ADP + phosphate + 2 H(+). It carries out the reaction L-glutamine + H2O = L-glutamate + NH4(+). It catalyses the reaction UTP + NH4(+) + ATP = CTP + ADP + phosphate + 2 H(+). The protein operates within pyrimidine metabolism; CTP biosynthesis via de novo pathway; CTP from UDP: step 2/2. With respect to regulation, allosterically activated by GTP, when glutamine is the substrate; GTP has no effect on the reaction when ammonia is the substrate. The allosteric effector GTP functions by stabilizing the protein conformation that binds the tetrahedral intermediate(s) formed during glutamine hydrolysis. Inhibited by the product CTP, via allosteric rather than competitive inhibition. In terms of biological role, catalyzes the ATP-dependent amination of UTP to CTP with either L-glutamine or ammonia as the source of nitrogen. Regulates intracellular CTP levels through interactions with the four ribonucleotide triphosphates. The polypeptide is CTP synthase (Stenotrophomonas maltophilia (strain K279a)).